The sequence spans 209 residues: MARYCGPKNRIARRFGANIFGRGRNPLLRKPNPPGQHGMQRKKKSDYGLQLEEKQKLKACYGMILEKQLVKAYKEVVHKQGNVAQMFLEKFECRLDNIVYRLGFAKTIFAAQQLVSHGHVLVNGKKVDRRSFFVRPGMQISLKEKSRRLAIVTESLENKDQSSLPAYLSLDKAAFKGELVVSPELDQISSQLPLPVNVSVICEFLSHRT.

Residues 22 to 45 are disordered; it reads RGRNPLLRKPNPPGQHGMQRKKKS. The S4 RNA-binding domain occupies 93–154; that stretch reads CRLDNIVYRL…KSRRLAIVTE (62 aa).

This sequence belongs to the universal ribosomal protein uS4 family. In terms of assembly, part of the 30S ribosomal subunit. Contacts protein S5. The interaction surface between S4 and S5 is involved in control of translational fidelity.

Functionally, one of the primary rRNA binding proteins, it binds directly to 16S rRNA where it nucleates assembly of the body of the 30S subunit. In terms of biological role, with S5 and S12 plays an important role in translational accuracy. The chain is Small ribosomal subunit protein uS4 from Chlamydia muridarum (strain MoPn / Nigg).